A 121-amino-acid polypeptide reads, in one-letter code: uncharacterized protein (121 aa).

A helical membrane pass occupies residues 6–26; it reads ITTASILLVVIVAFCAAAPMI.

It localises to the membrane. This is an uncharacterized protein from Caenorhabditis elegans.